Here is a 147-residue protein sequence, read N- to C-terminus: Cytochrome c-type biogenesis protein CcmE (147 aa).

Residues 1 to 7 (MTVRQRR) lie on the Cytoplasmic side of the membrane. A helical; Signal-anchor for type II membrane protein transmembrane segment spans residues 8–28 (FAMVILVVIGVSIATGLGLKA). Residues 29–147 (FQENILFFYN…KTKANTEDKL (119 aa)) lie on the Periplasmic side of the membrane. Residues H123 and Y127 each contribute to the heme site.

Belongs to the CcmE/CycJ family.

The protein resides in the cell inner membrane. Its function is as follows. Heme chaperone required for the biogenesis of c-type cytochromes. Transiently binds heme delivered by CcmC and transfers the heme to apo-cytochromes in a process facilitated by CcmF and CcmH. The polypeptide is Cytochrome c-type biogenesis protein CcmE (Nitrosococcus oceani (strain ATCC 19707 / BCRC 17464 / JCM 30415 / NCIMB 11848 / C-107)).